A 704-amino-acid polypeptide reads, in one-letter code: Plasma membrane ATPase 2 (704 aa).

A helical membrane pass occupies residues 1 to 16; the sequence is CSIAVGMIIEIIVMYP. Over 17–26 the chain is Extracellular; the sequence is IQHRKYRPGI. The chain crosses the membrane as a helical span at residues 27–48; that stretch reads DNLLVLLIGGIPIAMPTVLSVT. Topologically, residues 49 to 395 are cytoplasmic; the sequence is MAIGSHRLAQ…TSRAIFQRMK (347 aa). Residue Asp-81 is the 4-aspartylphosphate intermediate of the active site. Residues Asp-340 and Asp-344 each coordinate Mg(2+). A helical transmembrane segment spans residues 396–417; that stretch reads NYTIYAVSITIRIVLGFMLLAL. Residues 418-422 lie on the Extracellular side of the membrane; the sequence is IWKFD. A helical membrane pass occupies residues 423-445; that stretch reads FPPFMVLIIAILNDGTIMTISKD. The Cytoplasmic portion of the chain corresponds to 446–461; sequence RVKPSPLPDSWKLAEI. A helical membrane pass occupies residues 462 to 482; sequence FTTGVVLGGYLAMMTVIFFWA. Residues 483–507 lie on the Extracellular side of the membrane; that stretch reads AYETQFFPRVFGVSTLQRTATDDFR. Residues 508 to 528 form a helical membrane-spanning segment; sequence KLASAIYLQVSTISQALIFVT. The Cytoplasmic portion of the chain corresponds to 529–540; sequence RSRSWSFVERPG. The chain crosses the membrane as a helical span at residues 541-561; the sequence is LLLVVALIVAQLVATLIAVYA. At 562-570 the chain is on the extracellular side; sequence SWSFAAIEG. A helical transmembrane segment spans residues 571–591; sequence IGWGWAGVIWLYNLVFYFPLD. Residues 592 to 704 lie on the Cytoplasmic side of the membrane; that stretch reads IIKFLIRYAL…IETIQQSYTV (113 aa).

It belongs to the cation transport ATPase (P-type) (TC 3.A.3) family. Type IIIA subfamily. As to quaternary structure, possibly exists as a homodimer or a homotrimer.

Its subcellular location is the cell membrane. The enzyme catalyses ATP + H2O + H(+)(in) = ADP + phosphate + 2 H(+)(out). Its function is as follows. The plasma membrane ATPase of plants and fungi is a hydrogen ion pump. The proton gradient it generates drives the active transport of nutrients by H(+)-symport. The resulting external acidification and/or internal alkinization may mediate growth responses. This chain is Plasma membrane ATPase 2 (LHA2), found in Solanum lycopersicum (Tomato).